A 400-amino-acid polypeptide reads, in one-letter code: Formate-dependent phosphoribosylglycinamide formyltransferase (400 aa).

N(1)-(5-phospho-beta-D-ribosyl)glycinamide is bound by residues 22 to 23 (EL) and Glu-82. Residues Arg-115, Lys-157, 162–167 (SSGKGQ), 197–200 (EGFI), and Glu-205 contribute to the ATP site. The region spanning 120 to 315 (RLAAETLGLP…EFELHARAIL (196 aa)) is the ATP-grasp domain. Glu-274 and Glu-286 together coordinate Mg(2+). Residues Asp-293, Lys-362, and 369–370 (RR) each bind N(1)-(5-phospho-beta-D-ribosyl)glycinamide.

This sequence belongs to the PurK/PurT family. Homodimer.

The enzyme catalyses N(1)-(5-phospho-beta-D-ribosyl)glycinamide + formate + ATP = N(2)-formyl-N(1)-(5-phospho-beta-D-ribosyl)glycinamide + ADP + phosphate + H(+). It functions in the pathway purine metabolism; IMP biosynthesis via de novo pathway; N(2)-formyl-N(1)-(5-phospho-D-ribosyl)glycinamide from N(1)-(5-phospho-D-ribosyl)glycinamide (formate route): step 1/1. In terms of biological role, involved in the de novo purine biosynthesis. Catalyzes the transfer of formate to 5-phospho-ribosyl-glycinamide (GAR), producing 5-phospho-ribosyl-N-formylglycinamide (FGAR). Formate is provided by PurU via hydrolysis of 10-formyl-tetrahydrofolate. The polypeptide is Formate-dependent phosphoribosylglycinamide formyltransferase (Cupriavidus metallidurans (strain ATCC 43123 / DSM 2839 / NBRC 102507 / CH34) (Ralstonia metallidurans)).